Here is a 406-residue protein sequence, read N- to C-terminus: NAD(P)H-quinone oxidoreductase subunit H, organellar chromatophore (406 aa).

The protein belongs to the complex I 49 kDa subunit family. As to quaternary structure, NDH is composed of at least 16 different subunits, 5 of which are encoded in the nucleus.

The protein resides in the plastid. It localises to the organellar chromatophore thylakoid membrane. The enzyme catalyses a quinone + NADH + H(+) = a quinol + NAD(+). Functionally, NDH shuttles electrons from NAD(P)H:plastoquinone, via FMN and iron-sulfur (Fe-S) centers, to quinones in the photosynthetic chain and possibly in a chloroplast respiratory chain. The immediate electron acceptor for the enzyme in this species is believed to be plastoquinone. Couples the redox reaction to proton translocation, and thus conserves the redox energy in a proton gradient. In Paulinella chromatophora, this protein is NAD(P)H-quinone oxidoreductase subunit H, organellar chromatophore.